We begin with the raw amino-acid sequence, 339 residues long: Glycerol-3-phosphate dehydrogenase [NAD(P)+] (339 aa).

Residues Ser15, Tyr16, His36, and Lys110 each coordinate NADPH. Sn-glycerol 3-phosphate contacts are provided by Lys110, Gly139, and Thr141. Ala143 contacts NADPH. Positions 195, 248, 258, 259, and 260 each coordinate sn-glycerol 3-phosphate. The active-site Proton acceptor is the Lys195. NADPH is bound at residue Arg259. Residues Val283 and Glu285 each coordinate NADPH.

It belongs to the NAD-dependent glycerol-3-phosphate dehydrogenase family.

It localises to the cytoplasm. The catalysed reaction is sn-glycerol 3-phosphate + NAD(+) = dihydroxyacetone phosphate + NADH + H(+). It catalyses the reaction sn-glycerol 3-phosphate + NADP(+) = dihydroxyacetone phosphate + NADPH + H(+). It functions in the pathway membrane lipid metabolism; glycerophospholipid metabolism. In terms of biological role, catalyzes the reduction of the glycolytic intermediate dihydroxyacetone phosphate (DHAP) to sn-glycerol 3-phosphate (G3P), the key precursor for phospholipid synthesis. The sequence is that of Glycerol-3-phosphate dehydrogenase [NAD(P)+] from Pectobacterium atrosepticum (strain SCRI 1043 / ATCC BAA-672) (Erwinia carotovora subsp. atroseptica).